The primary structure comprises 262 residues: MIDKSAFIHPTAIVEDGAVIGANAHIGPFCIVGPQVEIGEGTVLKSHVAVNGQTKIGRDNEIYQFASIGEVNQDLKYAGEPTRVEIGDRNRIRESVTIHRGTVQGGGLTKVGSDNLLMINAHVAHDCTVGNRCILANNATLAGHVSVDDFAIIGGMTAVHQFCIIGAHVMVGGCSGVAQDVPPYVIAQGNHATPFGVNIEGLKRRGFSREGLVAIRNAYKLLYRSGKTLDEAKLEIAELAEKHPEVKAFTEFFERSTRGPIR.

Belongs to the transferase hexapeptide repeat family. LpxA subfamily. In terms of assembly, homotrimer.

It is found in the cytoplasm. The catalysed reaction is a (3R)-hydroxyacyl-[ACP] + UDP-N-acetyl-alpha-D-glucosamine = a UDP-3-O-[(3R)-3-hydroxyacyl]-N-acetyl-alpha-D-glucosamine + holo-[ACP]. The protein operates within glycolipid biosynthesis; lipid IV(A) biosynthesis; lipid IV(A) from (3R)-3-hydroxytetradecanoyl-[acyl-carrier-protein] and UDP-N-acetyl-alpha-D-glucosamine: step 1/6. Involved in the biosynthesis of lipid A, a phosphorylated glycolipid that anchors the lipopolysaccharide to the outer membrane of the cell. The protein is Acyl-[acyl-carrier-protein]--UDP-N-acetylglucosamine O-acyltransferase of Salmonella dublin (strain CT_02021853).